Here is a 319-residue protein sequence, read N- to C-terminus: Acetyl-coenzyme A carboxylase carboxyl transferase subunit alpha (319 aa).

The region spanning 35-296 (DLEKEIKQLE…KQRLLEQLKE (262 aa)) is the CoA carboxyltransferase C-terminal domain.

Belongs to the AccA family. As to quaternary structure, acetyl-CoA carboxylase is a heterohexamer composed of biotin carboxyl carrier protein (AccB), biotin carboxylase (AccC) and two subunits each of ACCase subunit alpha (AccA) and ACCase subunit beta (AccD).

It is found in the cytoplasm. The catalysed reaction is N(6)-carboxybiotinyl-L-lysyl-[protein] + acetyl-CoA = N(6)-biotinyl-L-lysyl-[protein] + malonyl-CoA. It participates in lipid metabolism; malonyl-CoA biosynthesis; malonyl-CoA from acetyl-CoA: step 1/1. Its function is as follows. Component of the acetyl coenzyme A carboxylase (ACC) complex. First, biotin carboxylase catalyzes the carboxylation of biotin on its carrier protein (BCCP) and then the CO(2) group is transferred by the carboxyltransferase to acetyl-CoA to form malonyl-CoA. This Aliivibrio fischeri (strain ATCC 700601 / ES114) (Vibrio fischeri) protein is Acetyl-coenzyme A carboxylase carboxyl transferase subunit alpha.